Reading from the N-terminus, the 807-residue chain is uncharacterized protein (807 aa).

Residues Met-1–Gly-18 form the signal peptide. Over Leu-19–Glu-704 the chain is Extracellular. A compositionally biased stretch (polar residues) spans Thr-133–Gly-142. Positions Thr-133 to Asp-171 are disordered. Asn-277 and Asn-660 each carry an N-linked (GlcNAc...) asparagine; by host glycan. A helical membrane pass occupies residues Val-705–Ile-725. Topologically, residues Ser-726–Asn-807 are cytoplasmic.

It localises to the host membrane. This is an uncharacterized protein from Magallana gigas (Pacific oyster).